A 701-amino-acid chain; its full sequence is F-box/LRR-repeat protein 17 (701 aa).

Disordered regions lie at residues 73 to 93, 227 to 250, and 279 to 321; these read SAGLEEEPPLSPPPPPPRDGA, GGGGPAGGGASPPRPPDAGCCQAP, and VRAG…IPDI. Over residues 81-90 the composition is skewed to pro residues; it reads PLSPPPPPPR. The span at 227–236 shows a compositional bias: gly residues; that stretch reads GGGGPAGGGA. Polar residues predominate over residues 285–294; that stretch reads APSSAQQQPE. The 48-residue stretch at 318–365 folds into the F-box domain; that stretch reads IPDINQLPPSILLKIFSNLSLNERCLSASLVCKYWRDLCLDFQFWKQL.

The protein belongs to the FBXL17 family. Part of the SCF (SKP1-CUL1-F-box) E3 ubiquitin-protein ligase complex SCF(FBXL17) composed of CUL1, SKP1, RBX1 and FBXL17. Interacts with BTB domain-containing proteins such as KLHL12, BCL6 and BACH1; specifically recognizes and binds a conserved degron of non-consecutive residues present at the interface of BTB dimers of aberrant composition. Interacts with SUFU. Interacts with PRMT1.

The protein resides in the cytoplasm. It is found in the nucleus. Its function is as follows. Substrate-recognition component of the SCF(FBXL17) E3 ubiquitin ligase complex, a key component of a quality control pathway required to ensure functional dimerization of BTB domain-containing proteins (dimerization quality control, DQC). FBXL17 specifically recognizes and binds a conserved degron of non-consecutive residues present at the interface of BTB dimers of aberrant composition: aberrant BTB dimer are then ubiquitinated by the SCF(FBXL17) complex and degraded by the proteasome. The ability of the SCF(FBXL17) complex to eliminate compromised BTB dimers is required for the differentiation and survival of neural crest and neuronal cells. The SCF(FBXL17) complex mediates ubiquitination and degradation of BACH1. The SCF(FBXL17) complex is also involved in the regulation of the hedgehog/smoothened (Hh) signaling pathway by mediating the ubiquitination and degradation of SUFU, allowing the release of GLI1 from SUFU for proper Hh signal transduction. The SCF(FBXL17) complex mediates ubiquitination and degradation of PRMT1. The protein is F-box/LRR-repeat protein 17 of Mus musculus (Mouse).